We begin with the raw amino-acid sequence, 545 residues long: Chaperonin GroEL (545 aa).

ATP is bound by residues 30 to 33, K51, 87 to 91, G415, 483 to 485, and D499; these read TLGP, DGTTT, and NAA.

Belongs to the chaperonin (HSP60) family. As to quaternary structure, forms a cylinder of 14 subunits composed of two heptameric rings stacked back-to-back. Interacts with the co-chaperonin GroES.

The protein localises to the cytoplasm. The enzyme catalyses ATP + H2O + a folded polypeptide = ADP + phosphate + an unfolded polypeptide.. Together with its co-chaperonin GroES, plays an essential role in assisting protein folding. The GroEL-GroES system forms a nano-cage that allows encapsulation of the non-native substrate proteins and provides a physical environment optimized to promote and accelerate protein folding. In Aquifex aeolicus (strain VF5), this protein is Chaperonin GroEL.